The following is a 216-amino-acid chain: Probable nicotinate-nucleotide adenylyltransferase (216 aa).

Belongs to the NadD family.

The catalysed reaction is nicotinate beta-D-ribonucleotide + ATP + H(+) = deamido-NAD(+) + diphosphate. It participates in cofactor biosynthesis; NAD(+) biosynthesis; deamido-NAD(+) from nicotinate D-ribonucleotide: step 1/1. In terms of biological role, catalyzes the reversible adenylation of nicotinate mononucleotide (NaMN) to nicotinic acid adenine dinucleotide (NaAD). This chain is Probable nicotinate-nucleotide adenylyltransferase, found in Geobacter sulfurreducens (strain ATCC 51573 / DSM 12127 / PCA).